The following is a 265-amino-acid chain: tRNA(His) guanylyltransferase (265 aa).

Residues Asp-29, Gly-30, and Asp-76 each contribute to the Mg(2+) site. Residues 29-34 and 75-76 contribute to the GTP site; these read DGKGFH and SD.

Belongs to the tRNA(His) guanylyltransferase family. It depends on Mg(2+) as a cofactor.

It catalyses the reaction a 5'-end ribonucleotide-tRNA(His) + GTP + ATP + H2O = a 5'-end phospho-guanosine-ribonucleotide-tRNA(His) + AMP + 2 diphosphate + H(+). Adds a GMP to the 5'-end of tRNA(His) after transcription and RNase P cleavage. The polypeptide is tRNA(His) guanylyltransferase (THG1) (Debaryomyces hansenii (strain ATCC 36239 / CBS 767 / BCRC 21394 / JCM 1990 / NBRC 0083 / IGC 2968) (Yeast)).